A 938-amino-acid polypeptide reads, in one-letter code: Isoleucine--tRNA ligase (938 aa).

The short motif at 58–68 (PYANGHIHLGT) is the 'HIGH' region element. E565 serves as a coordination point for L-isoleucyl-5'-AMP. Positions 606 to 610 (KMSKS) match the 'KMSKS' region motif. K609 contributes to the ATP binding site. Residues C905, C908, C925, and C928 each contribute to the Zn(2+) site.

This sequence belongs to the class-I aminoacyl-tRNA synthetase family. IleS type 1 subfamily. As to quaternary structure, monomer. Zn(2+) serves as cofactor.

It is found in the cytoplasm. It carries out the reaction tRNA(Ile) + L-isoleucine + ATP = L-isoleucyl-tRNA(Ile) + AMP + diphosphate. Its function is as follows. Catalyzes the attachment of isoleucine to tRNA(Ile). As IleRS can inadvertently accommodate and process structurally similar amino acids such as valine, to avoid such errors it has two additional distinct tRNA(Ile)-dependent editing activities. One activity is designated as 'pretransfer' editing and involves the hydrolysis of activated Val-AMP. The other activity is designated 'posttransfer' editing and involves deacylation of mischarged Val-tRNA(Ile). The sequence is that of Isoleucine--tRNA ligase from Nitratidesulfovibrio vulgaris (strain DSM 19637 / Miyazaki F) (Desulfovibrio vulgaris).